The sequence spans 391 residues: Casein kinase II subunit alpha (391 aa).

The segment at 36-41 (QDDYQL) is interaction with beta subunit. Residues 39–324 (YQLVRKLGRG…AREAMEHPYF (286 aa)) enclose the Protein kinase domain. ATP contacts are provided by residues 45–53 (LGRGKYSEV) and Lys-68. Catalysis depends on Asp-156, which acts as the Proton acceptor. Polar residues predominate over residues 335-346 (GSSNMPGGSTPV). Positions 335–363 (GSSNMPGGSTPVSSASMMSGISSVPTPSP) are disordered. Residues 347 to 357 (SSASMMSGISS) are compositionally biased toward low complexity.

It belongs to the protein kinase superfamily. Ser/Thr protein kinase family. CK2 subfamily. As to quaternary structure, tetramer composed of an alpha chain, an alpha' and two beta chains. Interacts with RNPS1.

The protein resides in the nucleus. The enzyme catalyses L-seryl-[protein] + ATP = O-phospho-L-seryl-[protein] + ADP + H(+). It catalyses the reaction L-threonyl-[protein] + ATP = O-phospho-L-threonyl-[protein] + ADP + H(+). Its function is as follows. Catalytic subunit of a constitutively active serine/threonine-protein kinase complex that phosphorylates a large number of substrates containing acidic residues C-terminal to the phosphorylated serine or threonine. Regulates numerous cellular processes, such as cell cycle progression, apoptosis and transcription, as well as viral infection. May act as a regulatory node which integrates and coordinates numerous signals leading to an appropriate cellular response. During mitosis, functions as a component of the p53/TP53-dependent spindle assembly checkpoint (SAC) that maintains cyclin-B-CDK1 activity and G2 arrest in response to spindle damage. Can also negatively regulate apoptosis. Phosphorylates the caspases CASP9 and CASP2 and the apoptotic regulator NOL3. Phosphorylation protects CASP9 from cleavage and activation by CASP8, and inhibits the dimerization of CASP2 and activation of CASP8. Plays an important role in the circadian clock function by phosphorylating BMAL1. This Gallus gallus (Chicken) protein is Casein kinase II subunit alpha (CSNK2A1).